The chain runs to 409 residues: tRNA(Met) cytidine acetate ligase (409 aa).

ATP contacts are provided by residues 7 to 20 (VVEYNPMHNGHLYH), G102, N169, and R194.

Belongs to the TmcAL family.

Its subcellular location is the cytoplasm. The catalysed reaction is cytidine(34) in elongator tRNA(Met) + acetate + ATP = N(4)-acetylcytidine(34) in elongator tRNA(Met) + AMP + diphosphate. Functionally, catalyzes the formation of N(4)-acetylcytidine (ac(4)C) at the wobble position of elongator tRNA(Met), using acetate and ATP as substrates. First activates an acetate ion to form acetyladenylate (Ac-AMP) and then transfers the acetyl group to tRNA to form ac(4)C34. This chain is tRNA(Met) cytidine acetate ligase, found in Clostridium botulinum (strain Okra / Type B1).